The primary structure comprises 238 residues: Large ribosomal subunit protein uL2 (238 aa).

A disordered region spans residues 197–219 (ASDHPFGGKRHSNHSKPFTVSKW).

This sequence belongs to the universal ribosomal protein uL2 family. Part of the 50S ribosomal subunit. Forms a bridge to the 30S subunit in the 70S ribosome.

In terms of biological role, one of the primary rRNA binding proteins. Required for association of the 30S and 50S subunits to form the 70S ribosome, for tRNA binding and peptide bond formation. It has been suggested to have peptidyltransferase activity; this is somewhat controversial. Makes several contacts with the 16S rRNA in the 70S ribosome. This is Large ribosomal subunit protein uL2 from Nanoarchaeum equitans (strain Kin4-M).